A 740-amino-acid polypeptide reads, in one-letter code: MTSRDQLVQQVLRDLQEAVESEGLEGLIGAALEAKQVLSSFTLPICQKGGPGAQVLEVDSVALSLYPEDAPRNMLPLVCKGEGSLLFEATSLLLWGHTGLSLELRARTVVEMLLHRHYYLQGMIDSKVMLQAVRYSLCSEESPEMTNLSFATLEAIFDADVKATCFPTSFSNVWHLYALASILECNIYSIYPMRNIKIRPYFNRVIMPRCSTHVTSMLHIMWAGQPLTSHLFRHQYFAPVVGLEEVEADCTASLNPVPPNLGPLLPPAKTLELLNREPGLSYSHLCDRISITKSTFYRWRRQTQEHRQKVATRFSAKHFLQDSFHRGGFVPLQQFLQRFPEISRSTYYAWKHELLGSGANSALGPATPSREALAVPEVERPPGKKAAEEVGCSSLAAAMLSPPSMILMQRAKSFLEYCISLNKLVPYRCFKCRFPGISRSTYYNWRRKALRRTPSFKLSQAAFETAESLQPTDVGKETPFSLKREAGEEETGKAGSGAPLTSRGLISPKMPLSRWQRRLRRAARKQVLNGHLPFCRFRLRYPSLLPSTFWVWKSLSRRSPGMQIPSLSQRRQKPQGRQKPEGRQKPEEQQKPEGRQKPEGRQKPVEPQAMEADQNVPAMVVPPAETLPVATSPEDVPGGPSREGNIIQEAAMTQSQPHSGSLPSQTLAEAPGGSDGQVLVMDMLTTTRFKAQAKLFLQKRFQSKTFPSYKEFQALFPLTARSTYYMWKRALYEGLTLIDG.

3 disordered regions span residues 485–506 (EAGE…RGLI), 560–616 (PGMQ…DQNV), and 653–673 (TQSQ…APGG). The segment covering 578 to 604 (QKPEGRQKPEEQQKPEGRQKPEGRQKP) has biased composition (basic and acidic residues). Residues 653–667 (TQSQPHSGSLPSQTL) are compositionally biased toward polar residues.

Belongs to the vertnin family.

The protein resides in the nucleus. Its function is as follows. Acts as a transcription factor that regulates development of thoracic vertebrae. The polypeptide is Vertnin (Vrtn) (Mus musculus (Mouse)).